The following is a 340-amino-acid chain: Annexin A2-A (340 aa).

The segment at alanine 2–leucine 25 is P10 binding site. Annexin repeat units follow at residues phenylalanine 34–lysine 105, threonine 106–lysine 177, glutamate 190–glutamine 262, and asparagine 266–glycine 337.

The protein belongs to the annexin family. As to quaternary structure, tetramer of 2 light chains (p10 proteins) and 2 heavy chains (p36 proteins).

The protein localises to the secreted. It localises to the extracellular space. It is found in the extracellular matrix. The protein resides in the basement membrane. Calcium-regulated membrane-binding protein whose affinity for calcium is greatly enhanced by anionic phospholipids. It binds two calcium ions with high affinity. The chain is Annexin A2-A (anxa2-a) from Xenopus laevis (African clawed frog).